Here is a 907-residue protein sequence, read N- to C-terminus: Whirlin (907 aa).

The 84-residue stretch at 140 to 223 (LVSLRRAKAH…LVLSVYSAGR (84 aa)) folds into the PDZ 1 domain. The disordered stretch occupies residues 243-264 (SISPPSGLPQPHGGALRQQEGD). The region spanning 279-361 (KVNLVLGDGR…LILTVKDVGR (83 aa)) is the PDZ 2 domain. 4 disordered regions span residues 502–540 (SMKA…TVSS), 565–663 (SVDD…SSKR), 684–717 (QSPP…QTGT), and 742–815 (PQTR…PTST). The segment covering 521 to 540 (SYSDTGSSTGSHGTSTTVSS) has biased composition (low complexity). The segment covering 609-626 (PPSSMPSCSGTVFSAPQN) has biased composition (polar residues). Residues 628–642 (SPPAGTAPTPGTSSA) are compositionally biased toward low complexity. A Phosphoserine modification is found at Ser685. The segment covering 743–762 (QTRTASTLSQLSDSGQTLSE) has biased composition (polar residues). Basic and acidic residues predominate over residues 789–800 (SSKELPRNERPT). Residues 816–899 (LVRVKKSAAT…TKDRDYIDFL (84 aa)) form the PDZ 3 domain.

In terms of assembly, forms homooligomers. Interacts (via C-terminal PDZ domain) with MYO15A; this interaction is necessary for localization of WHRN to stereocilia tips. Interacts (via C-terminal PDZ domain) with MPP1/p55. Interacts with LRRC4C/NGL1. Interacts with MYO7A. Interacts with RPGR. Interacts with EPS8. Interacts with CASK. Interacts with CIB2. Component of USH2 complex, composed of ADGRV1, PDZD7, USH2A and WHRN. Interacts (via PDZ domains) with PDZD7; the interaction is direct. Interacts (via N-terminal PDZ domain) with USH2A (via cytoplasmic region). Interacts with ADGRV1/MASS1 (via cytoplasmic region).

The protein localises to the cytoplasm. It is found in the cell projection. It localises to the stereocilium. Its subcellular location is the growth cone. The protein resides in the photoreceptor inner segment. The protein localises to the synapse. Its function is as follows. Involved in hearing and vision as member of the USH2 complex. Necessary for elongation and maintenance of inner and outer hair cell stereocilia in the organ of Corti in the inner ear. Involved in the maintenance of the hair bundle ankle region, which connects stereocilia in cochlear hair cells of the inner ear. In retina photoreceptors, required for the maintenance of periciliary membrane complex that seems to play a role in regulating intracellular protein transport. The protein is Whirlin of Homo sapiens (Human).